A 161-amino-acid chain; its full sequence is RNA pyrophosphohydrolase (161 aa).

Residues 6–149 (GYRPNVGIIL…KREVYRRAMR (144 aa)) form the Nudix hydrolase domain. Positions 38 to 59 (GGIKKDESPEEALFRELKEEVG) match the Nudix box motif.

Belongs to the Nudix hydrolase family. RppH subfamily. It depends on a divalent metal cation as a cofactor.

Its function is as follows. Accelerates the degradation of transcripts by removing pyrophosphate from the 5'-end of triphosphorylated RNA, leading to a more labile monophosphorylated state that can stimulate subsequent ribonuclease cleavage. The polypeptide is RNA pyrophosphohydrolase (Hahella chejuensis (strain KCTC 2396)).